A 471-amino-acid polypeptide reads, in one-letter code: 3-isopropylmalate dehydratase large subunit (471 aa).

Residues Cys349, Cys409, and Cys412 each contribute to the [4Fe-4S] cluster site.

This sequence belongs to the aconitase/IPM isomerase family. LeuC type 1 subfamily. As to quaternary structure, heterodimer of LeuC and LeuD. The cofactor is [4Fe-4S] cluster.

The enzyme catalyses (2R,3S)-3-isopropylmalate = (2S)-2-isopropylmalate. It functions in the pathway amino-acid biosynthesis; L-leucine biosynthesis; L-leucine from 3-methyl-2-oxobutanoate: step 2/4. In terms of biological role, catalyzes the isomerization between 2-isopropylmalate and 3-isopropylmalate, via the formation of 2-isopropylmaleate. The sequence is that of 3-isopropylmalate dehydratase large subunit from Aliivibrio fischeri (strain ATCC 700601 / ES114) (Vibrio fischeri).